The following is a 347-amino-acid chain: Protein RecA (347 aa).

ATP is bound at residue 65-72 (GPESSGKT).

The protein belongs to the RecA family.

Its subcellular location is the cytoplasm. In terms of biological role, can catalyze the hydrolysis of ATP in the presence of single-stranded DNA, the ATP-dependent uptake of single-stranded DNA by duplex DNA, and the ATP-dependent hybridization of homologous single-stranded DNAs. It interacts with LexA causing its activation and leading to its autocatalytic cleavage. The polypeptide is Protein RecA (Marinobacter nauticus (strain ATCC 700491 / DSM 11845 / VT8) (Marinobacter aquaeolei)).